The chain runs to 367 residues: Calcium uniporter protein, mitochondrial (367 aa).

A mitochondrion-targeting transit peptide spans 1-12 (MAMPRVLCRVRL). Over 13-232 (LIHNDFSVIS…LEEKKLELEQ (220 aa)) the chain is Mitochondrial matrix. Residues 61–80 (KQDASSSSSDSDSSDSDEDD) are disordered. The stretch at 199–233 (REHQLQKEVELTTQLETLQQELLPLEEKKLELEQV) forms a coiled coil. Residues 233–253 (VANRRSNWMAWAGLGLMSVQF) form a helical membrane-spanning segment. The Mitochondrial intermembrane portion of the chain corresponds to 254-262 (GILARLTWW). A helical transmembrane segment spans residues 263–284 (EYSWDIMEPVTYFVTYGTAMAA). The short motif at 266–276 (WDIMEPVTYFV) is the Selectivity filter element. Glu-270 is a Ca(2+) binding site. At 285–367 (YAYFVLTREE…KKQVEEKAKE (83 aa)) the chain is on the mitochondrial matrix side.

This sequence belongs to the MCU (TC 1.A.77) family. In terms of assembly, homotetramer. Component of the uniplex complex, composed of MCU, EMRE, MICU1 and MICU2 in a 4:4:1:1 stoichiometry.

Its subcellular location is the mitochondrion inner membrane. It carries out the reaction Ca(2+)(in) = Ca(2+)(out). MCU channel activity is regulated by the heterodimer composed of MICU1 and MICU2, which act as calcium-sensors. At low calcium levels, MICU1 occludes the pore of the MCU channel, preventing mitochondrial calcium uptake. At higher calcium levels, calcium-binding to MICU1 and MICU2 induces a conformational change that weakens MCU-MICU1 interactions and moves the MICU1-MICU2 heterodimer away from the pore, allowing calcium permeation through the channel. Channel-forming and calcium-conducting subunit of the mitochondrial inner membrane calcium uniporter complex (uniplex), which mediates calcium uptake into the mitochondrial matrix. MCU channel activity is regulated by the calcium-sensor subunits of the uniplex MICU1 and MICU2. Mitochondrial calcium homeostasis plays key roles in cellular physiology and regulates ATP production, cytoplasmic calcium signals and activation of cell death pathways. This Tribolium castaneum (Red flour beetle) protein is Calcium uniporter protein, mitochondrial.